The chain runs to 359 residues: Phosphoserine aminotransferase (359 aa).

Arg41 is an L-glutamate binding site. Residues 75–76, Trp101, Thr151, Asp171, and Gln194 each bind pyridoxal 5'-phosphate; that span reads AS. Lys195 bears the N6-(pyridoxal phosphate)lysine mark. 236–237 is a binding site for pyridoxal 5'-phosphate; the sequence is NT.

It belongs to the class-V pyridoxal-phosphate-dependent aminotransferase family. SerC subfamily. As to quaternary structure, homodimer. Requires pyridoxal 5'-phosphate as cofactor.

It localises to the cytoplasm. The enzyme catalyses O-phospho-L-serine + 2-oxoglutarate = 3-phosphooxypyruvate + L-glutamate. It catalyses the reaction 4-(phosphooxy)-L-threonine + 2-oxoglutarate = (R)-3-hydroxy-2-oxo-4-phosphooxybutanoate + L-glutamate. Its pathway is amino-acid biosynthesis; L-serine biosynthesis; L-serine from 3-phospho-D-glycerate: step 2/3. It functions in the pathway cofactor biosynthesis; pyridoxine 5'-phosphate biosynthesis; pyridoxine 5'-phosphate from D-erythrose 4-phosphate: step 3/5. Functionally, catalyzes the reversible conversion of 3-phosphohydroxypyruvate to phosphoserine and of 3-hydroxy-2-oxo-4-phosphonooxybutanoate to phosphohydroxythreonine. The polypeptide is Phosphoserine aminotransferase (Thiobacillus denitrificans (strain ATCC 25259 / T1)).